We begin with the raw amino-acid sequence, 108 residues long: Large ribosomal subunit protein bL31B (108 aa).

Residues K86 to K108 are disordered. The span at K97–K108 shows a compositional bias: basic residues.

The protein belongs to the bacterial ribosomal protein bL31 family. Type B subfamily. Part of the 50S ribosomal subunit.

The sequence is that of Large ribosomal subunit protein bL31B from Chlamydia trachomatis serovar L2 (strain ATCC VR-902B / DSM 19102 / 434/Bu).